The chain runs to 187 residues: Superoxide dismutase [Cu-Zn] (187 aa).

Positions 1-21 (MSLLPTGTLILLVLFILVLIT) are cleaved as a signal peptide. Residues His-76, His-78, and His-93 each contribute to the Cu cation site. Cys-87 and Cys-176 are oxidised to a cystine. The Zn(2+) site is built by His-93, His-101, His-110, and Asp-113. Position 150 (His-150) interacts with Cu cation.

This sequence belongs to the Cu-Zn superoxide dismutase family. Cu cation serves as cofactor. It depends on Zn(2+) as a cofactor.

The enzyme catalyses 2 superoxide + 2 H(+) = H2O2 + O2. Destroys radicals which are normally produced within the cells and which are toxic to biological systems. The polypeptide is Superoxide dismutase [Cu-Zn] (Chlorella (PBCV-1)).